Reading from the N-terminus, the 151-residue chain is UPF0756 membrane protein Lreu_0946 (151 aa).

4 consecutive transmembrane segments (helical) span residues W4 to I24, W52 to F72, A77 to L97, and L115 to I135.

It belongs to the UPF0756 family.

The protein resides in the cell membrane. This is UPF0756 membrane protein Lreu_0946 from Limosilactobacillus reuteri (strain DSM 20016) (Lactobacillus reuteri).